The following is a 204-amino-acid chain: MTKILLTGFEPFLDYKLNPTMQIVENLDGEKIENYHIIGRILSVDFQQSAEQLKRHIEEIEPQIIISLGLAGGRFKITPERIAINIKDGEPDNNGYSPVDESIQEEGADAYLTNLPIRHMINRLQEEGYPAEISNTAGTYLCNNIMYEGLVYAQQHEGVRAGFIHIPASFELAIQHGKIPGWHIRDLIAAVKLCIEETVRAGNH.

Residues Glu80, Cys142, and His165 contribute to the active site.

Belongs to the peptidase C15 family. Homotetramer.

It localises to the cytoplasm. It carries out the reaction Release of an N-terminal pyroglutamyl group from a polypeptide, the second amino acid generally not being Pro.. Its function is as follows. Removes 5-oxoproline from various penultimate amino acid residues except L-proline. This chain is Pyrrolidone-carboxylate peptidase, found in Lysinibacillus sphaericus (strain C3-41).